Reading from the N-terminus, the 66-residue chain is MPKMKTHRGSAKRFKKTGSGKLKRSHAYTSHLFANKSQKQKRKLRKSAVVSAGDFKRIKQMLANIK.

The span at methionine 1–histidine 26 shows a compositional bias: basic residues. Residues methionine 1–alanine 48 are disordered.

Belongs to the bacterial ribosomal protein bL35 family. As to quaternary structure, part of the 50S ribosomal subunit.

This chain is Large ribosomal subunit protein bL35, found in Bacillus subtilis (strain 168).